Reading from the N-terminus, the 348-residue chain is Probable tRNA pseudouridine synthase B (348 aa).

Catalysis depends on Asp93, which acts as the Nucleophile. One can recognise a PUA domain in the interval 260–335; that stretch reads LKKIYILDSA…IAVDIERVFM (76 aa).

It belongs to the pseudouridine synthase TruB family. Type 2 subfamily.

It catalyses the reaction uridine(55) in tRNA = pseudouridine(55) in tRNA. Functionally, could be responsible for synthesis of pseudouridine from uracil-55 in the psi GC loop of transfer RNAs. The protein is Probable tRNA pseudouridine synthase B of Nanoarchaeum equitans (strain Kin4-M).